A 247-amino-acid chain; its full sequence is ATP synthase subunit a, chloroplastic (247 aa).

5 consecutive transmembrane segments (helical) span residues 38–58 (QVLI…TIAV), 95–115 (VPFI…GALL), 134–154 (INTT…AGLT), 199–219 (LVVV…VMLL), and 220–240 (GLFT…AYIG).

Belongs to the ATPase A chain family. As to quaternary structure, F-type ATPases have 2 components, CF(1) - the catalytic core - and CF(0) - the membrane proton channel. CF(1) has five subunits: alpha(3), beta(3), gamma(1), delta(1), epsilon(1). CF(0) has four main subunits: a, b, b' and c.

Its subcellular location is the plastid. It localises to the chloroplast thylakoid membrane. Functionally, key component of the proton channel; it plays a direct role in the translocation of protons across the membrane. This is ATP synthase subunit a, chloroplastic from Solanum lycopersicum (Tomato).